Here is a 214-residue protein sequence, read N- to C-terminus: MSDTNPDCVIIGIAGASASGKSLIARTIYNELTAELGEDQIGVITEDCYYKDQSHLPMAERIKTNYDHPAAFDHALLAEHLKQLMAGKAVDIPTYSYSEHTRTDQTIRFTPKRIIILEGILLLNDSALRKLLNVSIFMDTPLDICLVRRLARDVQERGRTMDSVLEQYQKTVRPMFLQFIEPSKQYADIIIPRGGRNRIAIEMLKSRIRHLLLS.

15–22 (GASASGKS) is an ATP binding site.

Belongs to the uridine kinase family.

The protein localises to the cytoplasm. It catalyses the reaction uridine + ATP = UMP + ADP + H(+). The enzyme catalyses cytidine + ATP = CMP + ADP + H(+). It functions in the pathway pyrimidine metabolism; CTP biosynthesis via salvage pathway; CTP from cytidine: step 1/3. The protein operates within pyrimidine metabolism; UMP biosynthesis via salvage pathway; UMP from uridine: step 1/1. In Tolumonas auensis (strain DSM 9187 / NBRC 110442 / TA 4), this protein is Uridine kinase.